The following is a 144-amino-acid chain: UPF0225 protein RSc0270 (144 aa).

It belongs to the UPF0225 family.

In Ralstonia nicotianae (strain ATCC BAA-1114 / GMI1000) (Ralstonia solanacearum), this protein is UPF0225 protein RSc0270.